A 1544-amino-acid polypeptide reads, in one-letter code: Rho guanine nucleotide exchange factor 12 (1544 aa).

The tract at residues 1-62 (MSGTQSTITD…KTKSSSEESR (62 aa)) is disordered. Serine 2 carries the N-acetylserine modification. Positions 28-45 (SPTDKKQKVERIASHDFD) are enriched in basic and acidic residues. Serine 41 bears the Phosphoserine mark. The PDZ domain occupies 72–151 (CVIIQKDDNG…LTVQGRPPGS (80 aa)). Residues 194–262 (MGEENNVVHN…LSKATGSAQD (69 aa)) adopt a coiled-coil conformation. The tract at residues 247-346 (PQLQEQLSKA…SLVGSPSTRI (100 aa)) is disordered. Polar residues-rich tracts occupy residues 249 to 260 (LQEQLSKATGSA) and 293 to 309 (DCSS…NADS). Serine 309 bears the Phosphoserine mark. Over residues 313-329 (GPKERIYLEENPEKSET) the composition is skewed to basic and acidic residues. A compositionally biased stretch (polar residues) spans 330–344 (IQDTDTQSLVGSPST). A Phosphoserine modification is found at serine 341. Residues 367–558 (GQCSCFQSIE…LMYMKHLGVK (192 aa)) enclose the RGSL domain. The segment at 570–706 (GRIGFLPKIK…GDTLDGTPRT (137 aa)) is disordered. Basic and acidic residues predominate over residues 582-592 (MKKDKEGEEKG). Over residues 631 to 640 (STPSSVSPEP) the composition is skewed to polar residues. The residue at position 637 (serine 637) is a Phosphoserine. The segment covering 663–676 (ANSMSSVASGASFS) has biased composition (low complexity). Threonine 736 carries the post-translational modification Phosphothreonine. Residues 787–977 (KRQEVINELF…RQILNYVNQA (191 aa)) enclose the DH domain. The 114-residue stretch at 1019-1132 (KMIHEGPLVW…WQDLICRMAA (114 aa)) folds into the PH domain. Residues 1138–1149 (STKPIPLPQSTP) show a composition bias toward polar residues. Residues 1138–1179 (STKPIPLPQSTPGEGDNDEEDPSKLKEEQHGISVTGLQSPDR) are disordered. Phosphoserine occurs at positions 1288, 1327, 1377, 1457, and 1541.

In terms of assembly, interacts with GNA12 and GNA13, probably through the RGS-like domain. Interacts with RHOA, PLXNB1 and PLXNB2. Interacts through its PDZ domain with IGF1R beta subunit. Interacts with GCSAM. Found in a complex with ARHGEF11 and ARHGEF12; binding to ARHGEF11 and ARHGEF12 enhances CDC42 GEF activity of PLEKHG4B, and PLEKHG4B, in turn, inhibits ARHGEF11- and ARHGEF12-mediated RHOA activation. Ubiquitously expressed. Isoform 2 is found in jejunum and testis.

It localises to the cytoplasm. The protein resides in the membrane. Its function is as follows. May play a role in the regulation of RhoA GTPase by guanine nucleotide-binding alpha-12 (GNA12) and alpha-13 (GNA13). Acts as guanine nucleotide exchange factor (GEF) for RhoA GTPase and may act as GTPase-activating protein (GAP) for GNA12 and GNA13. In Homo sapiens (Human), this protein is Rho guanine nucleotide exchange factor 12 (ARHGEF12).